A 595-amino-acid polypeptide reads, in one-letter code: Transketolase-like protein 1 (595 aa).

Thiamine diphosphate is bound at residue 93-95 (GWP). Residues D125, N155, and I157 each contribute to the Mg(2+) site. N155 serves as a coordination point for thiamine diphosphate. The thiamine diphosphate site is built by K217, E339, and F365. Catalysis depends on E339, which acts as the Proton donor. Substrate contacts are provided by H389 and D397. H401 serves as a coordination point for thiamine diphosphate.

This sequence belongs to the transketolase family. Homodimer. Mg(2+) serves as cofactor. The cofactor is Ca(2+). It depends on Mn(2+) as a cofactor. Co(2+) is required as a cofactor. Requires thiamine diphosphate as cofactor. As to expression, not expressed in the embryonic neocortex.

It is found in the cytoplasm. The enzyme catalyses D-sedoheptulose 7-phosphate + D-glyceraldehyde 3-phosphate = aldehydo-D-ribose 5-phosphate + D-xylulose 5-phosphate. Catalyzes the transfer of a two-carbon ketol group from a ketose donor to an aldose acceptor, via a covalent intermediate with the cofactor thiamine pyrophosphate. The chain is Transketolase-like protein 1 from Mus musculus (Mouse).